The chain runs to 698 residues: Cytoplasmic polyadenylation element-binding protein 3 (698 aa).

A compositionally biased stretch (basic and acidic residues) spans 1-11; sequence MQDDLLMDKSK. Disordered regions lie at residues 1–114 and 158–208; these read MQDD…WSTG and AQTQ…SAAA. Residues 13–28 are compositionally biased toward low complexity; that stretch reads QPQPQQQQRQQQQPQP. The span at 29–44 shows a compositional bias: polar residues; sequence ESSVSEAPSTPLSSET. The segment covering 87-96 has biased composition (pro residues); sequence PQQPPPPQEP. Positions 103 to 114 are enriched in polar residues; that stretch reads LSPSFGSTWSTG. Pro residues predominate over residues 165 to 185; it reads QPPPPAPAPQPAQPAQPPQAQ. Residues 186–208 are compositionally biased toward low complexity; it reads PPQQRRSPASPSQAPYAQRSAAA. Phosphoserine occurs at positions 192, 195, and 290. Position 308 is an asymmetric dimethylarginine (Arg-308). RRM domains lie at 441 to 532 and 549 to 631; these read RKVF…PWNL and KTIF…PYVL.

This sequence belongs to the RRM CPEB family. In terms of assembly, following synaptic activity, forms amyloid-like oligomers. Aggregation requires an intact actin cytoskeleton. Interacts with STAT5B; this inhibits STAT5B-mediated transcriptional activation. Interacts with E3 ubiquitin-protein ligase NEURL1; this leads to monoubiquitination and activation of CPEB3. Interacts with CAPN2; this leads to cleavage of CPEB3. Interacts (via C-terminal RNA-binding region) with TOB1; TOB1 also binds CNOT7/CAF1 and recruits it to CPEB3 to form a ternary complex. Interacts with SUMO-conjugating enzyme UBC9. Interacts with IPO5; the interaction is enhanced in a RAN-regulated manner following neuronal stimulation and mediates CPEB3 nuclear import. Interacts with exportin XPO1/CRM1. Activated by NEURL1-mediated monoubiquitination, resulting in the growth of new dendritic spines and increased levels of GRIA1 and GRIA2. NEURL1-mediated monoubiquitination facilitates synaptic plasticity and hippocampal-dependent memory storage. In terms of processing, under basal unstimulated conditions when CPEB3 is mainly unaggregated, sumoylated and acts as a translational repressor. Following neuronal stimulation, becomes desumoylated and aggregated which is required for the translation of mRNA targets and for dendritic filopodia formation. Post-translationally, following neuronal stimulation, cleaved by CAPN2 which abolishes its translational repressor activity, leading to translation of CPEB3 target mRNAs. Phosphorylation is enhanced by neuronal stimulation.

It localises to the cytoplasm. It is found in the nucleus. The protein localises to the synapse. Its subcellular location is the cell projection. The protein resides in the dendrite. It localises to the postsynaptic density. In terms of biological role, sequence-specific RNA-binding protein which acts as a translational repressor in the basal unstimulated state but, following neuronal stimulation, acts as a translational activator. In contrast to CPEB1, does not bind to the cytoplasmic polyadenylation element (CPE), a uridine-rich sequence element within the mRNA 3'-UTR, but binds to a U-rich loop within a stem-loop structure. Required for the consolidation and maintenance of hippocampal-based long term memory. In the basal state, binds to the mRNA 3'-UTR of the glutamate receptors GRIA2/GLUR2 mRNA and negatively regulates their translation. Also represses the translation of DLG4, GRIN1, GRIN2A and GRIN2B. When activated, acts as a translational activator of GRIA1 and GRIA2. In the basal state, suppresses SUMO2 translation but activates it following neuronal stimulation. Binds to the 3'-UTR of TRPV1 mRNA and represses TRPV1 translation which is required to maintain normal thermoception. Binds actin mRNA, leading to actin translational repression in the basal state and to translational activation following neuronal stimulation. Negatively regulates target mRNA levels by binding to TOB1 which recruits CNOT7/CAF1 to a ternary complex and this leads to target mRNA deadenylation and decay. In addition to its role in translation, binds to and inhibits the transcriptional activation activity of STAT5B without affecting its dimerization or DNA-binding activity. This, in turn, represses transcription of the STAT5B target gene EGFR which has been shown to play a role in enhancing learning and memory performance. In contrast to CPEB1, CPEB2 and CPEB4, not required for cell cycle progression. The chain is Cytoplasmic polyadenylation element-binding protein 3 (CPEB3) from Homo sapiens (Human).